A 253-amino-acid chain; its full sequence is MGQKVNPTGFRLGIIRDWTSRWYDDSPVISEKIKQDHIIRNYVLARLKKERAGIARINIERTTKHVKINIYAARPGAVVGRKGEEINNLSQELSRIIGKEVKIDVVEVIKPEIEAQLIGENIAYQLENRVSFRRAMKQAIQQAMRAGAEGVRIRCAGRLGGAEIARAEQYKEGKIPLHTIRANVDYASVTAHTIAGTIGIKVWVYKGEVLVQRIDAIEEDEMKKMKDRRNDGGAKGRDSRDNRSKRRSRSKRS.

A KH type-2 domain is found at 39–109 (IRNYVLARLK…EVKIDVVEVI (71 aa)). The tract at residues 220 to 253 (DEMKKMKDRRNDGGAKGRDSRDNRSKRRSRSKRS) is disordered. Over residues 221–242 (EMKKMKDRRNDGGAKGRDSRDN) the composition is skewed to basic and acidic residues. A compositionally biased stretch (basic residues) spans 243–253 (RSKRRSRSKRS).

This sequence belongs to the universal ribosomal protein uS3 family. As to quaternary structure, part of the 30S ribosomal subunit. Forms a tight complex with proteins S10 and S14.

Functionally, binds the lower part of the 30S subunit head. Binds mRNA in the 70S ribosome, positioning it for translation. This is Small ribosomal subunit protein uS3 from Chlorobium chlorochromatii (strain CaD3).